A 302-amino-acid chain; its full sequence is Ventral anterior homeobox 2a (302 aa).

Disordered stretches follow at residues 1-35 (MFDQ…RDKG), 50-73 (KDIP…SQST), 156-175 (RRTK…SSST), 199-223 (PPNL…LGTS), and 282-302 (AFEP…KSTS). The homeobox DNA-binding region spans 105–164 (PKRTRTSFTAEQLYRLELEFQRCQYVVGRERTELARQLNLSETQVKVWFQNRRTKQKKDQ). Basic and acidic residues predominate over residues 161 to 172 (KKDQSRDSEKRS). Residues 204 to 223 (SSSQNNMGTSSGNGTNLGTS) show a composition bias toward low complexity. The segment covering 287–296 (TRLDRKDTAS) has biased composition (basic and acidic residues).

Belongs to the EMX homeobox family.

It is found in the nucleus. Functionally, transcription factor that may function in dorsoventral specification of the forebrain. Regulates the expression of Wnt signaling antagonists including the expression of a truncated tcf7l2 isoform that cannot bind ctnnb1 and acts therefore as a potent dominant-negative Wnt antagonist. Plays a crucial role in eye development and, in particular, in the specification of the ventral optic vesicle. May be a regulator of axial polarization in the retina. This chain is Ventral anterior homeobox 2a (vax2-a), found in Xenopus laevis (African clawed frog).